We begin with the raw amino-acid sequence, 283 residues long: MFNLMKTAVLMAAITALFMAIGSVLGGQQGMAIALVVALGMNFFSYWFSDKMVLKMYNAQEVDASSAPQFYGMVRELAAKAELPMPKVYLINEDAPNAFATGRNPQNAAVAATTGILRVLSERELRGVMAHELAHVKHRDILISTISATMAGAISMLANFAMFFGGRGSDGRPANPIAGILVMLLAPLAASLIQMAISRAREFEADRGGAEISGDPQALASALQKIQRYAQGIPLEAAERHPETAQMMIMNPLSGGGLRGLFSTHPATEERVAKLMAMVPQRV.

The next 2 membrane-spanning stretches (helical) occupy residues 7–27 (TAVL…VLGG) and 29–49 (QGMA…YWFS). Histidine 131 contributes to the Zn(2+) binding site. Glutamate 132 is an active-site residue. Residue histidine 135 participates in Zn(2+) binding. 2 consecutive transmembrane segments (helical) span residues 146 to 166 (ISAT…FFGG) and 177 to 197 (IAGI…QMAI). A Zn(2+)-binding site is contributed by glutamate 202.

The protein belongs to the peptidase M48B family. Requires Zn(2+) as cofactor.

The protein localises to the cell inner membrane. The protein is Protease HtpX homolog of Methylibium petroleiphilum (strain ATCC BAA-1232 / LMG 22953 / PM1).